A 429-amino-acid chain; its full sequence is Probable E3 ubiquitin-protein ligase makorin-1 (429 aa).

3 C3H1-type zinc fingers span residues 18–45 (WTKHVTCRYFMHGLCKEGDNCRYSHDLT), 48–75 (KPAAMMCKFFQKGNCVFGERCRFEHCKP), and 153–180 (ELRKQLCPYAAVGECRYGVNCAYLHGDV). The tract at residues 181-208 (CDMCGLQVLHPTDSSQRSEHTKACIEAH) is makorin-type Cys-His. Residues 226–280 (CGVCMEVVFEKANPSERRFGILSNCSHCYCLKCIRKWRSAKQFESKIIKSCPECR) form an RING-type zinc finger. The segment at 309–338 (GMGRKPCRYFDEGRGICPFGANCFYKHAFP) adopts a C3H1-type 4 zinc-finger fold. The tract at residues 343–362 (EEAQPQRRQTGSSSRNRNSR) is disordered. Residues 348-358 (QRRQTGSSSRN) show a composition bias toward low complexity.

It catalyses the reaction S-ubiquitinyl-[E2 ubiquitin-conjugating enzyme]-L-cysteine + [acceptor protein]-L-lysine = [E2 ubiquitin-conjugating enzyme]-L-cysteine + N(6)-ubiquitinyl-[acceptor protein]-L-lysine.. Its pathway is protein modification; protein ubiquitination. Its function is as follows. E3 ubiquitin ligase catalyzing the covalent attachment of ubiquitin moieties onto substrate proteins. The chain is Probable E3 ubiquitin-protein ligase makorin-1 from Takifugu rubripes (Japanese pufferfish).